We begin with the raw amino-acid sequence, 489 residues long: Ketol-acid reductoisomerase (NADP(+)) (489 aa).

Residues 16 to 207 (LRKCKLVEKN…GSHRAGVLHS (192 aa)) enclose the KARI N-terminal Rossmann domain. NADP(+) is bound by residues 44 to 47 (CGSQ), Arg67, Ser77, and 107 to 109 (DKQ). His131 is a catalytic residue. Gly157 is an NADP(+) binding site. KARI C-terminal knotted domains lie at 208-343 (SFIA…KCKI) and 344-483 (CHKE…MVDM). Mg(2+) is bound by residues Asp216, Glu220, Glu388, and Glu392. Ser413 provides a ligand contact to substrate.

The protein belongs to the ketol-acid reductoisomerase family. Mg(2+) is required as a cofactor.

The enzyme catalyses (2R)-2,3-dihydroxy-3-methylbutanoate + NADP(+) = (2S)-2-acetolactate + NADPH + H(+). It carries out the reaction (2R,3R)-2,3-dihydroxy-3-methylpentanoate + NADP(+) = (S)-2-ethyl-2-hydroxy-3-oxobutanoate + NADPH + H(+). The protein operates within amino-acid biosynthesis; L-isoleucine biosynthesis; L-isoleucine from 2-oxobutanoate: step 2/4. It functions in the pathway amino-acid biosynthesis; L-valine biosynthesis; L-valine from pyruvate: step 2/4. Functionally, involved in the biosynthesis of branched-chain amino acids (BCAA). Catalyzes an alkyl-migration followed by a ketol-acid reduction of (S)-2-acetolactate (S2AL) to yield (R)-2,3-dihydroxy-isovalerate. In the isomerase reaction, S2AL is rearranged via a Mg-dependent methyl migration to produce 3-hydroxy-3-methyl-2-ketobutyrate (HMKB). In the reductase reaction, this 2-ketoacid undergoes a metal-dependent reduction by NADPH to yield (R)-2,3-dihydroxy-isovalerate. In Buchnera aphidicola subsp. Schlechtendalia chinensis, this protein is Ketol-acid reductoisomerase (NADP(+)).